Consider the following 88-residue polypeptide: Small ribosomal subunit protein uS15 (88 aa).

It belongs to the universal ribosomal protein uS15 family. Part of the 30S ribosomal subunit. Forms a bridge to the 50S subunit in the 70S ribosome, contacting the 23S rRNA.

One of the primary rRNA binding proteins, it binds directly to 16S rRNA where it helps nucleate assembly of the platform of the 30S subunit by binding and bridging several RNA helices of the 16S rRNA. Its function is as follows. Forms an intersubunit bridge (bridge B4) with the 23S rRNA of the 50S subunit in the ribosome. The sequence is that of Small ribosomal subunit protein uS15 from Finegoldia magna (strain ATCC 29328 / DSM 20472 / WAL 2508) (Peptostreptococcus magnus).